The sequence spans 317 residues: Transaldolase (317 aa).

Lysine 125 serves as the catalytic Schiff-base intermediate with substrate.

Belongs to the transaldolase family. Type 1 subfamily. As to quaternary structure, homodimer.

The protein resides in the cytoplasm. The enzyme catalyses D-sedoheptulose 7-phosphate + D-glyceraldehyde 3-phosphate = D-erythrose 4-phosphate + beta-D-fructose 6-phosphate. Its pathway is carbohydrate degradation; pentose phosphate pathway; D-glyceraldehyde 3-phosphate and beta-D-fructose 6-phosphate from D-ribose 5-phosphate and D-xylulose 5-phosphate (non-oxidative stage): step 2/3. In terms of biological role, transaldolase is important for the balance of metabolites in the pentose-phosphate pathway. The polypeptide is Transaldolase (Delftia acidovorans (strain DSM 14801 / SPH-1)).